We begin with the raw amino-acid sequence, 340 residues long: CRISPR-associated protein Cas7 (340 aa).

As to quaternary structure, component of the Cascade-like complex (Cascade I-B), composed of Cas5, Cas6, Cas7 and crRNA.

Its subcellular location is the cytoplasm. CRISPR (clustered regularly interspaced short palindromic repeat) is an adaptive immune system that provides protection against mobile genetic elements (viruses, transposable elements and conjugative plasmids). CRISPR clusters contain sequences complementary to antecedent mobile elements and target invading nucleic acids. CRISPR clusters are transcribed and processed into CRISPR RNA (crRNA). Plasmid targeted by CRISPR locus P1 transform wild-type cells very poorly. This protein helps process or stabilize pre-crRNA into individual crRNA units, in vivo Cas6 and Cas7 are also required for optimal crRNA processing and/or stability. This Haloferax volcanii (strain ATCC 29605 / DSM 3757 / JCM 8879 / NBRC 14742 / NCIMB 2012 / VKM B-1768 / DS2) (Halobacterium volcanii) protein is CRISPR-associated protein Cas7.